The following is a 521-amino-acid chain: Apolipoprotein N-acyltransferase (521 aa).

6 helical membrane passes run 27 to 47 (VLLA…IAFA), 64 to 84 (LGFV…TIVV), 93 to 113 (IVSV…PAVV), 125 to 145 (ISLL…RAFL), 167 to 187 (IADI…NVVL), and 202 to 222 (YPVK…AYGF). A CN hydrolase domain is found at 239-483 (IQGNIDQNIK…EAVLNGEVRL (245 aa)). Glutamate 281 (proton acceptor) is an active-site residue. The active site involves lysine 344. Cysteine 394 (nucleophile) is an active-site residue. The helical transmembrane segment at 493-513 (YGDVFAWACVAGAAVVAALAF) threads the bilayer.

It belongs to the CN hydrolase family. Apolipoprotein N-acyltransferase subfamily.

It localises to the cell inner membrane. It catalyses the reaction N-terminal S-1,2-diacyl-sn-glyceryl-L-cysteinyl-[lipoprotein] + a glycerophospholipid = N-acyl-S-1,2-diacyl-sn-glyceryl-L-cysteinyl-[lipoprotein] + a 2-acyl-sn-glycero-3-phospholipid + H(+). It participates in protein modification; lipoprotein biosynthesis (N-acyl transfer). Its function is as follows. Catalyzes the phospholipid dependent N-acylation of the N-terminal cysteine of apolipoprotein, the last step in lipoprotein maturation. The protein is Apolipoprotein N-acyltransferase of Geobacter metallireducens (strain ATCC 53774 / DSM 7210 / GS-15).